The primary structure comprises 395 residues: Elongation factor Tu (395 aa).

One can recognise a tr-type G domain in the interval 10-204 (KPHVNIGTIG…TVDSYIPEPA (195 aa)). A G1 region spans residues 19-26 (GHVDHGKT). GTP is bound at residue 19–26 (GHVDHGKT). Thr-26 contributes to the Mg(2+) binding site. Residues 60–64 (GITIN) are G2. The G3 stretch occupies residues 81 to 84 (DAPG). GTP is bound by residues 81–85 (DAPGH) and 136–139 (NKTD). The tract at residues 136 to 139 (NKTD) is G4. The G5 stretch occupies residues 174-176 (SAL).

The protein belongs to the TRAFAC class translation factor GTPase superfamily. Classic translation factor GTPase family. EF-Tu/EF-1A subfamily. As to quaternary structure, monomer.

The protein resides in the cytoplasm. The catalysed reaction is GTP + H2O = GDP + phosphate + H(+). GTP hydrolase that promotes the GTP-dependent binding of aminoacyl-tRNA to the A-site of ribosomes during protein biosynthesis. This Leuconostoc mesenteroides subsp. mesenteroides (strain ATCC 8293 / DSM 20343 / BCRC 11652 / CCM 1803 / JCM 6124 / NCDO 523 / NBRC 100496 / NCIMB 8023 / NCTC 12954 / NRRL B-1118 / 37Y) protein is Elongation factor Tu.